Consider the following 207-residue polypeptide: MSYSGEQERQAPHMALVPMVVEQTARGERSYDIYSRLLKERIIFLTGQVEDYMANLVVAQMLFLEAENPEKDIYLYINSPGGVITAGMSIYDTMQFIKPDVSTICMGQACSMGAFLLTAGAKGKRICLPNSRVMIHQPLGGFQGQATDIEIHAKEILKVKAKMNELMAKHTGQPLEAIERDTERDRFLSASEAVEYGLVDSVFTNRG.

Catalysis depends on serine 111, which acts as the Nucleophile. Histidine 136 is a catalytic residue.

This sequence belongs to the peptidase S14 family. Fourteen ClpP subunits assemble into 2 heptameric rings which stack back to back to give a disk-like structure with a central cavity, resembling the structure of eukaryotic proteasomes.

It localises to the cytoplasm. The enzyme catalyses Hydrolysis of proteins to small peptides in the presence of ATP and magnesium. alpha-casein is the usual test substrate. In the absence of ATP, only oligopeptides shorter than five residues are hydrolyzed (such as succinyl-Leu-Tyr-|-NHMec, and Leu-Tyr-Leu-|-Tyr-Trp, in which cleavage of the -Tyr-|-Leu- and -Tyr-|-Trp bonds also occurs).. In terms of biological role, cleaves peptides in various proteins in a process that requires ATP hydrolysis. Has a chymotrypsin-like activity. Plays a major role in the degradation of misfolded proteins. This Pectobacterium atrosepticum (strain SCRI 1043 / ATCC BAA-672) (Erwinia carotovora subsp. atroseptica) protein is ATP-dependent Clp protease proteolytic subunit.